Consider the following 201-residue polypeptide: 3-isopropylmalate dehydratase small subunit (201 aa).

It belongs to the LeuD family. LeuD type 1 subfamily. In terms of assembly, heterodimer of LeuC and LeuD.

It catalyses the reaction (2R,3S)-3-isopropylmalate = (2S)-2-isopropylmalate. The protein operates within amino-acid biosynthesis; L-leucine biosynthesis; L-leucine from 3-methyl-2-oxobutanoate: step 2/4. In terms of biological role, catalyzes the isomerization between 2-isopropylmalate and 3-isopropylmalate, via the formation of 2-isopropylmaleate. This is 3-isopropylmalate dehydratase small subunit from Ruegeria sp. (strain TM1040) (Silicibacter sp.).